Here is a 105-residue protein sequence, read N- to C-terminus: Large ribosomal subunit protein uL24 (105 aa).

This sequence belongs to the universal ribosomal protein uL24 family. Part of the 50S ribosomal subunit.

Its function is as follows. One of two assembly initiator proteins, it binds directly to the 5'-end of the 23S rRNA, where it nucleates assembly of the 50S subunit. Functionally, one of the proteins that surrounds the polypeptide exit tunnel on the outside of the subunit. This Staphylococcus epidermidis (strain ATCC 35984 / DSM 28319 / BCRC 17069 / CCUG 31568 / BM 3577 / RP62A) protein is Large ribosomal subunit protein uL24.